A 362-amino-acid polypeptide reads, in one-letter code: Chorismate synthase (362 aa).

Positions 47 and 53 each coordinate NADP(+). FMN-binding positions include 124-126 (RSS), G285, 300-304 (KPTAT), and R326.

Belongs to the chorismate synthase family. In terms of assembly, homotetramer. Requires FMNH2 as cofactor.

It catalyses the reaction 5-O-(1-carboxyvinyl)-3-phosphoshikimate = chorismate + phosphate. The protein operates within metabolic intermediate biosynthesis; chorismate biosynthesis; chorismate from D-erythrose 4-phosphate and phosphoenolpyruvate: step 7/7. Its function is as follows. Catalyzes the anti-1,4-elimination of the C-3 phosphate and the C-6 proR hydrogen from 5-enolpyruvylshikimate-3-phosphate (EPSP) to yield chorismate, which is the branch point compound that serves as the starting substrate for the three terminal pathways of aromatic amino acid biosynthesis. This reaction introduces a second double bond into the aromatic ring system. This is Chorismate synthase from Cyanothece sp. (strain PCC 7425 / ATCC 29141).